A 283-amino-acid polypeptide reads, in one-letter code: NAD kinase (283 aa).

Aspartate 66 acts as the Proton acceptor in catalysis. Residues 66-67, 140-141, arginine 151, lysine 168, aspartate 170, 181-186, and glutamine 240 each bind NAD(+); these read DG, ND, and TGYCLS.

This sequence belongs to the NAD kinase family. A divalent metal cation is required as a cofactor.

The protein resides in the cytoplasm. The catalysed reaction is NAD(+) + ATP = ADP + NADP(+) + H(+). In terms of biological role, involved in the regulation of the intracellular balance of NAD and NADP, and is a key enzyme in the biosynthesis of NADP. Catalyzes specifically the phosphorylation on 2'-hydroxyl of the adenosine moiety of NAD to yield NADP. In Geobacter metallireducens (strain ATCC 53774 / DSM 7210 / GS-15), this protein is NAD kinase.